Here is a 757-residue protein sequence, read N- to C-terminus: Protein transport protein SEC23-2 (757 aa).

Zn(2+) contacts are provided by C56, C61, C80, and C83.

The protein belongs to the SEC23/SEC24 family. SEC23 subfamily. As to quaternary structure, the COPII coat is composed of at least 5 proteins: the SEC23/24 complex, the SEC13/31 complex, and the protein SAR1.

It localises to the cytoplasm. Its subcellular location is the cytoplasmic vesicle. The protein localises to the COPII-coated vesicle membrane. It is found in the endoplasmic reticulum membrane. The protein resides in the golgi apparatus membrane. Functionally, component of the coat protein complex II (COPII) which promotes the formation of transport vesicles from the endoplasmic reticulum (ER). The coat has two main functions, the physical deformation of the endoplasmic reticulum membrane into vesicles and the selection of cargo molecules. The polypeptide is Protein transport protein SEC23-2 (SEC232) (Candida glabrata (strain ATCC 2001 / BCRC 20586 / JCM 3761 / NBRC 0622 / NRRL Y-65 / CBS 138) (Yeast)).